Reading from the N-terminus, the 850-residue chain is Bifunctional levopimaradiene synthase, chloroplastic (850 aa).

A chloroplast-targeting transit peptide spans 1 to 52; that stretch reads MALPSSSLSSQIHTGATTQCIPHFHGSLNAGTSAGKRRSLYLRWGKGPSKIV. K250 contacts substrate. Mg(2+)-binding residues include D383 and D385. A DXDD motif motif is present at residues 383–386; sequence DIDD. K470 contacts substrate. D602, D606, N746, T750, and E754 together coordinate Mg(2+). The short motif at 602 to 606 is the DDXXD motif element; it reads DDLYD.

It belongs to the terpene synthase family. Tpsd subfamily. It depends on Mg(2+) as a cofactor.

The protein localises to the plastid. Its subcellular location is the chloroplast. The catalysed reaction is (2E,6E,10E)-geranylgeranyl diphosphate = (+)-copalyl diphosphate. The enzyme catalyses (+)-copalyl diphosphate = abieta-7,13-diene + diphosphate. It catalyses the reaction (+)-copalyl diphosphate = abieta-8(14),12-diene + diphosphate. It carries out the reaction (+)-copalyl diphosphate = neoabietadiene + diphosphate. The protein operates within terpene metabolism; oleoresin biosynthesis. Its function is as follows. Involved in defensive oleoresin formation in conifers in response to insect attack or other injury. Involved in diterpene (C20) olefins biosynthesis. Bifunctional enzyme that catalyzes two sequential cyclizations of geranylgeranyl diphosphate (GGPP) to levopimaradiene. Levopimaradiene is the major products of the enzyme with abietadiene and neoabietadiene. No activity with farnesyl diphosphate (FPP) as substrate. The chain is Bifunctional levopimaradiene synthase, chloroplastic from Pinus contorta (Shore pine).